Consider the following 300-residue polypeptide: MELNRLVTEGRLQESLEIDQVSTLEMVRIINEQDKQVALAVEKELPHIARAVDLIAERLRAGGRLFYVGAGTSGRLGILDASEIPPTYGAPPDLVQGVIAGGLEAVFRTREGAEDSREQGAADIAARVRPGDVVVGIAASGRTPYTVAALEEARRLGCATVAVTNNPDSALAAAADVAIAPVVGPEVIMGSTRMKAGTAQKMVLNMLSTGAMIRLGKVYSNLMVDMQASNEKLRHRAVRMVVQATGRDEDAAARALEEAGGSVKQAIVALLAGVDARTAREALDRAGGYVREAIRLAQGK.

The SIS domain maps to 55–217 (IAERLRAGGR…STGAMIRLGK (163 aa)). E83 serves as the catalytic Proton donor. E114 is an active-site residue.

The protein belongs to the GCKR-like family. MurNAc-6-P etherase subfamily. In terms of assembly, homodimer.

The enzyme catalyses N-acetyl-D-muramate 6-phosphate + H2O = N-acetyl-D-glucosamine 6-phosphate + (R)-lactate. Its pathway is amino-sugar metabolism; N-acetylmuramate degradation. In terms of biological role, specifically catalyzes the cleavage of the D-lactyl ether substituent of MurNAc 6-phosphate, producing GlcNAc 6-phosphate and D-lactate. In Symbiobacterium thermophilum (strain DSM 24528 / JCM 14929 / IAM 14863 / T), this protein is N-acetylmuramic acid 6-phosphate etherase.